We begin with the raw amino-acid sequence, 652 residues long: Protein high chlorophyll fluorescent 107 (652 aa).

2 disordered regions span residues 1–21 (MHFF…NTSS) and 78–121 (VFSP…EGKK). Residues 1-68 (MHFFFVPNSS…TFSSKNTYLY (68 aa)) constitute a chloroplast transit peptide. Residues 105-121 (PLLENSDKESSEEEGKK) show a composition bias toward basic and acidic residues. 12 TPR repeats span residues 168 to 201 (LDLS…WPED), 202 to 235 (GRPY…TQGE), 237 to 270 (SYIW…DKKH), 271 to 304 (VAAW…CGRN), 305 to 338 (EYIY…NSRS), 339 to 372 (CASW…SPKN), 374 to 406 (FAWH…NPRD), 407 to 440 (PVLL…DPRH), 441 to 474 (QPVW…DANT), 478 to 511 (SRCL…NSQS), 543 to 576 (TEVV…GQNN), and 598 to 631 (QQPE…DPLK). The disordered stretch occupies residues 585–610 (LRNMNRTKDSQSNQQPESSAGREDIE).

As to quaternary structure, may form homomultimers. Part of a multi-subunit complex in the range of 60-190 and 600-800 kDa in chloroplast membranes.

Its subcellular location is the plastid. It is found in the chloroplast. The protein resides in the chloroplast membrane. It localises to the chloroplast stroma. Functionally, involved, directly or indirectly, in the processing of chloroplast encoded mRNAs. Exhibits sequence-specific RNA binding and RNA remodeling activities, probably leading to the activation of translation of the target gene cluster psbB-psbT-psbH-petB-petD. Blocks 5'-3' and 3'-5' exoribonucleases (e.g. polynucleotide phosphorylase (PNPase), RNase R) in vitro. Necessary for intercistronic RNA processing of the psbH 5' untranslated region or the stabilization of 5' processed psbH RNAs. Also required for the synthesis of psbB. This Arabidopsis thaliana (Mouse-ear cress) protein is Protein high chlorophyll fluorescent 107.